A 1130-amino-acid chain; its full sequence is Transmembrane channel-like protein 3 (1130 aa).

Topologically, residues 1-148 (MKTSKASQRY…ASYFIFLRWL (148 aa)) are cytoplasmic. The chain crosses the membrane as a helical span at residues 149–169 (FGINIVLTVMTGAFVVLPELI). Residues 170–192 (AGQPFGSTASKTIPREQITSAQD) lie on the Extracellular side of the membrane. The chain crosses the membrane as a helical span at residues 193–213 (LDTVWSLGGYLQYSVLFYGYY). At 214–225 (GRERRIGRAGYR) the chain is on the cytoplasmic side. Residues 226–246 (LPLAYFLVGMAVFAYSFIVLL) traverse the membrane as a helical segment. Over 247–319 (KRMAKNSRTS…KNMAVTVCLR (73 aa)) the chain is Extracellular. Asn-264 is a glycosylation site (N-linked (GlcNAc...) asparagine). Residues 320-340 (IIANILVLLSLAGSIYLIYFV) form a helical membrane-spanning segment. The Cytoplasmic segment spans residues 341-361 (VDRSQKLEQSKKELTLWEKNE). A helical membrane pass occupies residues 362–382 (VSVVVSLVTMLAPSAFDLIAA). Residues 383-393 (LEMYHPRTTLR) are Extracellular-facing. The helical transmembrane segment at 394 to 414 (FQLARVLVLYLGNLYSLIIAL) threads the bilayer. At 415–509 (LDKVNSMNIE…CWETYVGQEM (95 aa)) the chain is on the cytoplasmic side. Residues 510-530 (LKLSVIDMLFTVASILLIDFF) traverse the membrane as a helical segment. Topologically, residues 531–570 (RGLFVRYLSDYWCWDLESKFPEYGEFKIAENVLHLVYNQG) are extracellular. The helical transmembrane segment at 571–591 (MIWMGAFFSPCLPAFNVLKLI) threads the bilayer. Residues 592 to 619 (GLMYLRSWAVLTCNVPHQQVFRASRSNN) are Cytoplasmic-facing. Residues 620–640 (FYLAMLLFMLFLCMLPTIFAI) form a helical membrane-spanning segment. At 641–680 (VHYKPSLNCGPFSGQEKIYDIVSETIENDFPTWFHAVVGH) the chain is on the extracellular side. The helical transmembrane segment at 681–701 (ISSPVVILPAVLLLFMLIYYL) threads the bilayer. At 702-1130 (QSIARSLKLS…DLNDLICSNV (429 aa)) the chain is on the cytoplasmic side. Disordered regions lie at residues 742–774 (DARQ…EESS), 819–893 (RSLP…FQPI), 999–1019 (SSCF…KYQR), 1033–1059 (QLER…LKAR), and 1097–1116 (QGRF…KSRQ). A compositionally biased stretch (polar residues) spans 747 to 767 (GSATEAESSENSKPKTLQARI). Basic and acidic residues predominate over residues 840–850 (SRSRPEQDTNR). Residues 856–876 (CSSTSNLHKNRSCSSVTQTQP) show a composition bias toward polar residues. Basic and acidic residues-rich tracts occupy residues 878 to 890 (KDVR…RKDF) and 1006 to 1017 (DRSENNTRDPKY). Polar residues predominate over residues 1097–1106 (QGRFPRSASQ).

Belongs to the TMC family. Detected in most neuronal organs and also in some non-neuronal tissues.

It localises to the membrane. Probable component of an ion channel. Molecular function hasn't been characterized yet. In Mus musculus (Mouse), this protein is Transmembrane channel-like protein 3.